The sequence spans 1322 residues: Centrosome-associated protein Alms1a (1322 aa).

Disordered stretches follow at residues 1 to 26 (MRAK…ESSR), 53 to 135 (TASS…SEVT), 165 to 193 (SQSA…SVLK), 252 to 442 (EEPS…NSVY), 464 to 614 (KHNQ…GSRP), 657 to 752 (ESST…ASTD), 814 to 844 (SKSQ…KERP), 856 to 911 (AEAE…LNQR), and 1083 to 1109 (ASAT…SSMM). Residues 53-62 (TASSGASGST) show a composition bias toward low complexity. Residues 78–111 (MEHESRPESGHRRRTKSSDHRSPDERGEAKEQLR) show a composition bias toward basic and acidic residues. Residues 165–189 (SQSAEDIRTPTKSPQMQNKKTQTPE) are compositionally biased toward polar residues. Residues 279 to 292 (SLNSGMESSLSSNK) show a composition bias toward low complexity. Positions 309-318 (EVSSCQTDCR) are enriched in polar residues. Residues 319 to 330 (SSSQKESTQGSS) are compositionally biased toward low complexity. Residues 338–350 (NFTTEGTQCSYNR) are compositionally biased toward polar residues. The segment covering 354–364 (EIDSIMEEEES) has biased composition (acidic residues). 2 stretches are compositionally biased toward basic and acidic residues: residues 365–375 (IDRRKKDDLRI) and 394–408 (SRRE…DDSR). The segment covering 409–430 (LNSPNSSRLGSEVSSRVESSRS) has biased composition (low complexity). Basic and acidic residues-rich tracts occupy residues 464 to 487 (KHNQ…EQHQ), 495 to 512 (PKGR…REQQ), and 519 to 538 (RDQR…EREQ). 2 stretches are compositionally biased toward low complexity: residues 594–605 (STGVTASTSTTS) and 657–669 (ESST…SSSS). The span at 678–696 (GSLQQVAATNTNQSNARSS) shows a compositional bias: polar residues. The segment covering 714–735 (AIGSSSPLPESVSYSGSTSGSG) has biased composition (low complexity). Polar residues-rich tracts occupy residues 737-751 (VITQ…NAST) and 822-832 (TESATAAQIPS). The span at 893–907 (LPAPPPTQPPPPPPH) shows a compositional bias: pro residues. A compositionally biased stretch (low complexity) spans 1092 to 1107 (SAITRSTTTTTNSSSS). The interaction with Klp10A stretch occupies residues 1115 to 1322 (MSVPMGMMNT…ISLNHSMAIM (208 aa)). Positions 1190–1309 (SLQDQLQLAR…FNKRLKSRVA (120 aa)) are ALMS motif.

This sequence belongs to the ALMS1 family. In terms of assembly, interacts (via C-terminus) with Klp10A. Interacts with SAK. In terms of tissue distribution, expressed in all germlines, including germline stem cells and spermatogonia.

It is found in the cytoplasm. Its subcellular location is the cytoskeleton. The protein localises to the microtubule organizing center. It localises to the centrosome. The protein resides in the centriole. Functionally, in asymmetrically dividing germline stem cells (GSCs), plays a critical role in ensuring centrosome duplication, which is essential for the production of centrosomes and centrioles in all downstream germ cells. Might recruit SAK for daughter centriole duplication. This chain is Centrosome-associated protein Alms1a, found in Drosophila melanogaster (Fruit fly).